Here is a 1383-residue protein sequence, read N- to C-terminus: DNA-directed RNA polymerase subunit beta (1383 aa).

Belongs to the RNA polymerase beta chain family. In terms of assembly, the RNAP catalytic core consists of 2 alpha, 1 beta, 1 beta' and 1 omega subunit. When a sigma factor is associated with the core the holoenzyme is formed, which can initiate transcription.

The enzyme catalyses RNA(n) + a ribonucleoside 5'-triphosphate = RNA(n+1) + diphosphate. In terms of biological role, DNA-dependent RNA polymerase catalyzes the transcription of DNA into RNA using the four ribonucleoside triphosphates as substrates. In Bartonella quintana (strain Toulouse) (Rochalimaea quintana), this protein is DNA-directed RNA polymerase subunit beta.